The following is a 150-amino-acid chain: MAKRVSLPDVVISAPKAVFKPAKEEALACILPKYYKSMADMSIKTNSVIDKCWFCNQDLVFRPISIETFKGGEVGYFCSKICRDSLASMVKSHVALREEPKISLLPLVFYEDKEKVINTINLLRDKDGVYGSCYFKENSQIIDISLRSLL.

It belongs to the orthopoxvirus VLTF-2/OPG126 family. As to quaternary structure, interacts with the late transcription elongation factor VLTF-4/OPG110. Interacts with the late transcription factors VLTF-1/OPG093.

In terms of biological role, acts with RNA polymerase to initiate transcription from late gene promoters. This is Viral late gene transcription factor 2 (OPG126) from Monkeypox virus.